Here is a 505-residue protein sequence, read N- to C-terminus: Membrane-bound O-acyltransferase GUP1 (505 aa).

Residues 1–217 (MFKAAMDASN…VAPIPLTDYN (217 aa)) are Extracellular-facing. A helical transmembrane segment spans residues 218-238 (FVNYMAYITYAPLFIAGPIIT). Topologically, residues 239–266 (FNDYIYQSDYKAMSSVKDYKRTFIYFLR) are cytoplasmic. Residues 267–287 (FAFCILVMEFLLHFMYVVAVS) traverse the membrane as a helical segment. At 288 to 296 (KTKAWEGDT) the chain is on the extracellular side. A helical transmembrane segment spans residues 297–317 (PFQLSMLGLFNLNIIWLKLLI). At 318 to 377 (PWRLFRLWSLIDGIDPPENMIRCMDNNFSTLAFWRAWHRSYNRWIIRYIYIPLGGGGKYR) the chain is on the cytoplasmic side. 2 helical membrane-spanning segments follow: residues 378-398 (ILNSLCVFSFVAIWHDIELKL) and 399-419 (LMWGWLVVIFIIPELAATAIF). The active site involves His392. Residues 420–430 (KNYQHEPWYRH) lie on the Cytoplasmic side of the membrane. Residues 431-451 (VCALGAVINIWMMMLANLFGF) form a helical membrane-spanning segment. Topologically, residues 452-464 (CMGKDGTMSLIKT) are extracellular. Residues 465 to 485 (LFTTAVGLRFLFLSLGALFVG) traverse the membrane as a helical segment. Over 486-505 (SQVMFELREAEKRRGVNVKC) the chain is Cytoplasmic.

The protein belongs to the membrane-bound acyltransferase family.

The protein resides in the cell membrane. Its subcellular location is the endoplasmic reticulum membrane. It localises to the mitochondrion membrane. Functionally, membrane-bound O-acyltransferase involved in the remodeling of glycosylphosphatidylinositol (GPI) anchors. Acts only on GPI-anchored proteins, but not on free GPI lipids. Also involved in lipid metabolism, having profound effects on sphingolipid-sterol-ordered domains integrity and assembly. Involved in cell integrity and apoptosis. The chain is Membrane-bound O-acyltransferase GUP1 (GUP1) from Millerozyma farinosa (Yeast).